We begin with the raw amino-acid sequence, 501 residues long: Ribose import ATP-binding protein RbsA (501 aa).

ABC transporter domains lie at 5-241 (LQLQ…VGRK) and 252-495 (APGE…VGKQ). 37 to 44 (GENGAGKS) is an ATP binding site.

This sequence belongs to the ABC transporter superfamily. Ribose importer (TC 3.A.1.2.1) family. The complex is composed of an ATP-binding protein (RbsA), two transmembrane proteins (RbsC) and a solute-binding protein (RbsB).

Its subcellular location is the cell inner membrane. The enzyme catalyses D-ribose(out) + ATP + H2O = D-ribose(in) + ADP + phosphate + H(+). Functionally, part of the ABC transporter complex RbsABC involved in ribose import. Responsible for energy coupling to the transport system. The sequence is that of Ribose import ATP-binding protein RbsA from Pectobacterium atrosepticum (strain SCRI 1043 / ATCC BAA-672) (Erwinia carotovora subsp. atroseptica).